The primary structure comprises 41 residues: Photosystem I reaction center subunit IX (41 aa).

The chain crosses the membrane as a helical span at residues 7 to 27; it reads YLSTAPVLLTLWMTFTAGFII.

This sequence belongs to the PsaJ family.

It is found in the plastid. It localises to the chloroplast thylakoid membrane. Its function is as follows. May help in the organization of the PsaE and PsaF subunits. This Trieres chinensis (Marine centric diatom) protein is Photosystem I reaction center subunit IX.